We begin with the raw amino-acid sequence, 111 residues long: Short neuropeptide F (111 aa).

A signal peptide spans 1-24 (MSAMYAKRCAALVLLVVTVGLVNA). A propeptide spanning residues 25-76 (TENYMDYGEEMAEKTPAENIHELYRLLLQRNTLDNAGFGGIPLEHLMIRKSQ) is cleaved from the precursor. The residue at position 85 (F85) is a Phenylalanine amide. Positions 88-111 (SGPHVSARALPRPMGAVAGYDDNN) are excised as a propeptide.

Expressed throughout the central nervous system (at protein level).

It localises to the secreted. Functionally, plays a role in controlling food intake and regulating body size. The polypeptide is Short neuropeptide F (Camponotus floridanus (Florida carpenter ant)).